The primary structure comprises 239 residues: Ribosomal RNA small subunit methyltransferase G (239 aa).

Residues glycine 80, phenylalanine 85, 103–105 (EAS), 131–132 (AE), and arginine 150 contribute to the S-adenosyl-L-methionine site.

It belongs to the methyltransferase superfamily. RNA methyltransferase RsmG family.

Its subcellular location is the cytoplasm. Functionally, specifically methylates the N7 position of a guanine in 16S rRNA. The protein is Ribosomal RNA small subunit methyltransferase G of Caldanaerobacter subterraneus subsp. tengcongensis (strain DSM 15242 / JCM 11007 / NBRC 100824 / MB4) (Thermoanaerobacter tengcongensis).